We begin with the raw amino-acid sequence, 1960 residues long: Myosin-9 (1960 aa).

N-acetylalanine is present on alanine 2. The segment at 2–838 (AQQAADKYLY…RLFTKVKPLL (837 aa)) is mediates interaction with LIMCH1. The residue at position 8 (lysine 8) is an N6-acetyllysine. Residue tyrosine 11 is modified to Phosphotyrosine. In terms of domain architecture, Myosin N-terminal SH3-like spans 27–77 (AAKKLVWVPSSKNGFEPASLKEEVGEEAIVELVENGKKVKVNKDDIQKMNP). Residues 81 to 776 (SKVEDMAELT…VLAHLEEERD (696 aa)) enclose the Myosin motor domain. Residue lysine 102 is modified to N6-acetyllysine. 174–181 (GESGAGKT) contacts ATP. Residues lysine 299, lysine 435, and lysine 613 each carry the N6-acetyllysine modification. Serine 628 carries the phosphoserine modification. The interval 654-676 (LAKLMATLRNTNPNFVRCIIPNH) is actin-binding. Tyrosine 754 carries the post-translational modification Phosphotyrosine. In terms of domain architecture, IQ spans 779-808 (ITDVIIGFQACCRGYLARKAFAKRQQQLTA). Residues 841 to 1926 (IRHEDELLAK…LKNKLRRGDL (1086 aa)) adopt a coiled-coil conformation. Residue lysine 850 is modified to N6-succinyllysine. N6-acetyllysine is present on residues lysine 860, lysine 975, and lysine 1024. The span at 1035 to 1055 (RLRREEKQRQELEKTRRKLEG) shows a compositional bias: basic and acidic residues. The segment at 1035 to 1057 (RLRREEKQRQELEKTRRKLEGDS) is disordered. Serine 1114 bears the Phosphoserine mark. A disordered region spans residues 1117-1167 (QEDLESERASRNKAEKQKRDLGEELEALKTELEDTLDSTAAQQELRSKREQ). The segment covering 1122-1148 (SERASRNKAEKQKRDLGEELEALKTEL) has biased composition (basic and acidic residues). Lysine 1234 and lysine 1249 each carry N6-acetyllysine. The interval 1327 to 1352 (LSTKLKQMEDEKNSFREQLEEEEEAK) is disordered. Over residues 1332–1352 (KQMEDEKNSFREQLEEEEEAK) the composition is skewed to basic and acidic residues. 6 positions are modified to N6-acetyllysine: lysine 1357, lysine 1392, lysine 1404, lysine 1410, lysine 1459, and lysine 1638. N6-succinyllysine is present on lysine 1669. Residue serine 1714 is modified to Phosphoserine. The tract at residues 1768–1788 (LERSHAQKNENARQQLERQNK) is disordered. An N6-acetyllysine mark is found at lysine 1793, lysine 1802, and lysine 1845. The disordered stretch occupies residues 1877 to 1908 (RQLEEAEEEAQRANASRRKLQRELEDATETAD). Residue arginine 1923 is modified to Omega-N-methylarginine. Threonine 1939 carries the post-translational modification Phosphothreonine. A disordered region spans residues 1939 to 1960 (TGDCSDEEVDGKADGADAKAAE). A Phosphoserine modification is found at serine 1943. Basic and acidic residues predominate over residues 1948–1960 (DGKADGADAKAAE).

Belongs to the TRAFAC class myosin-kinesin ATPase superfamily. Myosin family. Myosin is a hexameric protein that consists of 2 heavy chain subunits (MHC), 2 alkali light chain subunits (MLC) and 2 regulatory light chain subunits (MLC-2). Interacts with RASIP1. Interacts with DDR1. Interacts with PDLIM2. Interacts with SVIL. Interacts with HTRA3. Interacts with Myo7a. Interacts with CFAP95. Interacts with LIMCH1; independently of the integration of MYH9 into the myosin complex. Interacts with RAB3A. Interacts with ZBED4. Interacts with S100A4; this interaction increases cell motility. Post-translationally, ISGylated. In terms of processing, ubiquitination.

Its subcellular location is the cytoplasm. The protein localises to the cytoskeleton. It is found in the cell cortex. It localises to the cytoplasmic vesicle. The protein resides in the secretory vesicle. Its subcellular location is the cortical granule. Cellular myosin that appears to play a role in cytokinesis, cell shape, and specialized functions such as secretion and capping. Required for cortical actin clearance prior to oocyte exocytosis. Promotes cell motility in conjunction with S100A4. During cell spreading, plays an important role in cytoskeleton reorganization, focal contact formation (in the margins but not the central part of spreading cells), and lamellipodial retraction; this function is mechanically antagonized by MYH10. The sequence is that of Myosin-9 (Myh9) from Mus musculus (Mouse).